The following is a 146-amino-acid chain: Acidic phospholipase A2 S13-69J (146 aa).

Positions 1 to 19 (MYPAHLLVLLAVCVSLLGA) are cleaved as a signal peptide. Residues 20–27 (ASIPPQPL) constitute a propeptide that is removed on maturation. Disulfide bonds link Cys-38/Cys-98, Cys-54/Cys-145, Cys-56/Cys-72, Cys-71/Cys-126, Cys-78/Cys-119, Cys-87/Cys-112, and Cys-105/Cys-117. Ca(2+)-binding residues include Tyr-55, Gly-57, and Gly-59. Residue His-75 is part of the active site. Position 76 (Asp-76) interacts with Ca(2+). Residue Asp-120 is part of the active site.

Belongs to the phospholipase A2 family. Group I subfamily. D49 sub-subfamily. Ca(2+) serves as cofactor. Expressed by the venom gland.

It localises to the secreted. It catalyses the reaction a 1,2-diacyl-sn-glycero-3-phosphocholine + H2O = a 1-acyl-sn-glycero-3-phosphocholine + a fatty acid + H(+). Snake venom phospholipase A2 (PLA2) that inhibits collagen-induced platelet aggregation. PLA2 catalyzes the calcium-dependent hydrolysis of the 2-acyl groups in 3-sn-phosphoglycerides. The sequence is that of Acidic phospholipase A2 S13-69J from Austrelaps superbus (Lowland copperhead snake).